The sequence spans 249 residues: MTAERRPLIAGNWKMNGLRAAKSELRTVAAGLAGLSAETMICPPFTLIGAFAADVAGTQLMIGGQDCHPAESGAHTGDISAEMLRDAGAVAVILGHSERRIDHQEGDAIVKAKVKAAWRAGLLPVVCVGETLVERDAGEAAAVVTRQVRQSVPEGATAVSLVIAYEPIWAIGTGRTPTTDDVAEVHGAIRHILAERFGAEANGIRILYGGSVKPDNAAALLATANVDGALVGGASLKAADFLAIARAVG.

12–14 (NWK) is a binding site for substrate. The Electrophile role is filled by His-96. The Proton acceptor role is filled by Glu-166. Residues Gly-172, Ser-211, and 232-233 (GG) contribute to the substrate site.

The protein belongs to the triosephosphate isomerase family. As to quaternary structure, homodimer.

It is found in the cytoplasm. The catalysed reaction is D-glyceraldehyde 3-phosphate = dihydroxyacetone phosphate. Its pathway is carbohydrate biosynthesis; gluconeogenesis. It participates in carbohydrate degradation; glycolysis; D-glyceraldehyde 3-phosphate from glycerone phosphate: step 1/1. Involved in the gluconeogenesis. Catalyzes stereospecifically the conversion of dihydroxyacetone phosphate (DHAP) to D-glyceraldehyde-3-phosphate (G3P). The sequence is that of Triosephosphate isomerase from Xanthobacter flavus.